The sequence spans 159 residues: Peptide deformylase (159 aa).

Residues Cys-88 and His-130 each contribute to the Fe cation site. Residue Glu-131 is part of the active site. Residue His-134 participates in Fe cation binding.

The protein belongs to the polypeptide deformylase family. Fe(2+) serves as cofactor.

It catalyses the reaction N-terminal N-formyl-L-methionyl-[peptide] + H2O = N-terminal L-methionyl-[peptide] + formate. Functionally, removes the formyl group from the N-terminal Met of newly synthesized proteins. Requires at least a dipeptide for an efficient rate of reaction. N-terminal L-methionine is a prerequisite for activity but the enzyme has broad specificity at other positions. The polypeptide is Peptide deformylase (Caldanaerobacter subterraneus subsp. tengcongensis (strain DSM 15242 / JCM 11007 / NBRC 100824 / MB4) (Thermoanaerobacter tengcongensis)).